Here is a 124-residue protein sequence, read N- to C-terminus: Small ribosomal subunit protein uS12 (124 aa).

Residues 1 to 22 (MATVNQLVRKPRQKPDAKSNVA) are disordered. The residue at position 89 (aspartate 89) is a 3-methylthioaspartic acid.

The protein belongs to the universal ribosomal protein uS12 family. Part of the 30S ribosomal subunit. Contacts proteins S8 and S17. May interact with IF1 in the 30S initiation complex.

Its function is as follows. With S4 and S5 plays an important role in translational accuracy. Functionally, interacts with and stabilizes bases of the 16S rRNA that are involved in tRNA selection in the A site and with the mRNA backbone. Located at the interface of the 30S and 50S subunits, it traverses the body of the 30S subunit contacting proteins on the other side and probably holding the rRNA structure together. The combined cluster of proteins S8, S12 and S17 appears to hold together the shoulder and platform of the 30S subunit. The sequence is that of Small ribosomal subunit protein uS12 from Pseudoalteromonas atlantica (strain T6c / ATCC BAA-1087).